Here is a 186-residue protein sequence, read N- to C-terminus: ATP synthase subunit delta (186 aa).

Belongs to the ATPase delta chain family. As to quaternary structure, F-type ATPases have 2 components, F(1) - the catalytic core - and F(0) - the membrane proton channel. F(1) has five subunits: alpha(3), beta(3), gamma(1), delta(1), epsilon(1). F(0) has three main subunits: a(1), b(2) and c(10-14). The alpha and beta chains form an alternating ring which encloses part of the gamma chain. F(1) is attached to F(0) by a central stalk formed by the gamma and epsilon chains, while a peripheral stalk is formed by the delta and b chains.

Its subcellular location is the cell inner membrane. F(1)F(0) ATP synthase produces ATP from ADP in the presence of a proton or sodium gradient. F-type ATPases consist of two structural domains, F(1) containing the extramembraneous catalytic core and F(0) containing the membrane proton channel, linked together by a central stalk and a peripheral stalk. During catalysis, ATP synthesis in the catalytic domain of F(1) is coupled via a rotary mechanism of the central stalk subunits to proton translocation. In terms of biological role, this protein is part of the stalk that links CF(0) to CF(1). It either transmits conformational changes from CF(0) to CF(1) or is implicated in proton conduction. The protein is ATP synthase subunit delta of Fuscovulum blasticum (Rhodobacter blasticus).